We begin with the raw amino-acid sequence, 161 residues long: Ribonuclease P protein component 2 (161 aa).

This sequence belongs to the eukaryotic/archaeal RNase P protein component 2 family. In terms of assembly, consists of a catalytic RNA component and at least 4-5 protein subunits.

It is found in the cytoplasm. It catalyses the reaction Endonucleolytic cleavage of RNA, removing 5'-extranucleotides from tRNA precursor.. In terms of biological role, part of ribonuclease P, a protein complex that generates mature tRNA molecules by cleaving their 5'-ends. The polypeptide is Ribonuclease P protein component 2 (Natronomonas pharaonis (strain ATCC 35678 / DSM 2160 / CIP 103997 / JCM 8858 / NBRC 14720 / NCIMB 2260 / Gabara) (Halobacterium pharaonis)).